The primary structure comprises 80 residues: Cytochrome c oxidase subunit 7B, mitochondrial (80 aa).

Residues 1–24 constitute a mitochondrion transit peptide; sequence MLPLAKNALSRLQVRSIQQVVARQ. The Mitochondrial matrix portion of the chain corresponds to 25–39; sequence SHQKRAPSFHDKYGN. A helical membrane pass occupies residues 40–60; it reads AILAGGAIFCVSTWTYTATQI. Residues 61–80 lie on the Mitochondrial intermembrane side of the membrane; the sequence is GIEWNMSPVGRVTPKEWRDQ.

The protein belongs to the cytochrome c oxidase VIIb family. Component of the cytochrome c oxidase (complex IV, CIV), a multisubunit enzyme composed of 14 subunits. The complex is composed of a catalytic core of 3 subunits MT-CO1, MT-CO2 and MT-CO3, encoded in the mitochondrial DNA, and 11 supernumerary subunits COX4I, COX5A, COX5B, COX6A, COX6B, COX6C, COX7A, COX7B, COX7C, COX8 and NDUFA4, which are encoded in the nuclear genome. The complex exists as a monomer or a dimer and forms supercomplexes (SCs) in the inner mitochondrial membrane with NADH-ubiquinone oxidoreductase (complex I, CI) and ubiquinol-cytochrome c oxidoreductase (cytochrome b-c1 complex, complex III, CIII), resulting in different assemblies (supercomplex SCI(1)III(2)IV(1) and megacomplex MCI(2)III(2)IV(2)).

The protein localises to the mitochondrion inner membrane. It participates in energy metabolism; oxidative phosphorylation. Its function is as follows. Component of the cytochrome c oxidase, the last enzyme in the mitochondrial electron transport chain which drives oxidative phosphorylation. The respiratory chain contains 3 multisubunit complexes succinate dehydrogenase (complex II, CII), ubiquinol-cytochrome c oxidoreductase (cytochrome b-c1 complex, complex III, CIII) and cytochrome c oxidase (complex IV, CIV), that cooperate to transfer electrons derived from NADH and succinate to molecular oxygen, creating an electrochemical gradient over the inner membrane that drives transmembrane transport and the ATP synthase. Cytochrome c oxidase is the component of the respiratory chain that catalyzes the reduction of oxygen to water. Electrons originating from reduced cytochrome c in the intermembrane space (IMS) are transferred via the dinuclear copper A center (CU(A)) of subunit 2 and heme A of subunit 1 to the active site in subunit 1, a binuclear center (BNC) formed by heme A3 and copper B (CU(B)). The BNC reduces molecular oxygen to 2 water molecules using 4 electrons from cytochrome c in the IMS and 4 protons from the mitochondrial matrix. Plays a role in proper central nervous system (CNS) development in vertebrates. In Mus musculus (Mouse), this protein is Cytochrome c oxidase subunit 7B, mitochondrial (Cox7b).